Consider the following 803-residue polypeptide: H(+)/Cl(-) exchange transporter 7 (803 aa).

The tract at residues 1–46 (MANVSKKVSWSGRDRDDEEGAPLLRRTGQPDEETPLLNGAGPGARQ) is disordered. Topologically, residues 1-124 (MANVSKKVSW…TAFRTVEIKR (124 aa)) are cytoplasmic. A Phosphoserine modification is found at Ser9. The next 2 membrane-spanning stretches (helical) occupy residues 125-157 (WVICALIGILTGLVACFIDIVVENLAGLKYRVI) and 172-195 (FSLLLWATLNSAFVLVGSVIVAFI). Positions 201–205 (GSGIP) match the Selectivity filter part_1 motif. Ser202 contributes to the chloride binding site. An intramembrane region (helical) is located at residues 204-211 (IPQIKCFL). The next 2 helical transmembrane spans lie at 221–239 (RLKTLVIKVSGVILSVVGG) and 245–262 (EGPMIHSGSVIAAGISQG). Residues 243 to 247 (GKEGP) carry the Selectivity filter part_2 motif. 2 consecutive intramembrane regions (helical) follow at residues 286–298 (FVSAGAAAGVSAA) and 302–310 (PVGGVLFSL). A run of 5 helical transmembrane segments spans residues 320–339 (FLTWRIFFASMISTFTLNFV), 373–403 (IPVFIAMGVVGGILGAVFNALNYWLTMFRIR), 408–430 (PCLQVIEAMLVAAVTATVAFVLI), 485–505 (PMTLGLFTLVYFFLACWTYGL), and 510–533 (GVFIPSLLIGAAWGRLFGISMSYL). The short motif at 510-514 (GVFIP) is the Selectivity filter part_3 element. Phe512 contacts chloride. The segment at residues 543–557 (GKYALMGAAAQLGGI) is an intramembrane region (helical). The note=Loop between two helices intramembrane region spans 558-560 (VRM). Positions 561–572 (TLSLTVIMMEAT) form an intramembrane region, helical. The segment at residues 573-576 (SNVT) is an intramembrane region (note=Loop between two helices). Residues 577 to 595 (YGFPIMLVLMTAKIVGDVF) form a helical membrane-spanning segment. Residues 596–803 (IEGLYDMHIQ…GLEELSLAQT (208 aa)) lie on the Cytoplasmic side of the membrane. Position 600 (Tyr600) interacts with chloride. 2 consecutive CBS domains span residues 629–693 (MSTP…VFVE) and 739–797 (MNPS…GLEE). Residues 656-658 (HNG) and 781-784 (TRKD) contribute to the ATP site. Ser799 carries the phosphoserine modification.

It belongs to the chloride channel (TC 2.A.49) family. ClC-7/CLCN7 subfamily. In terms of assembly, chloride channel 7 are heteromers of alpha (CLCN7) and beta (OSTM1) subunits. As to expression, brain, testis, muscle and kidney.

It localises to the lysosome membrane. It carries out the reaction 2 chloride(in) + H(+)(out) = 2 chloride(out) + H(+)(in). Slowly voltage-gated channel mediating the exchange of chloride ions against protons. Functions as antiporter and contributes to the acidification of the lysosome lumen and may be involved in maintaining lysosomal pH. The CLC channel family contains both chloride channels and proton-coupled anion transporters that exchange chloride or another anion for protons. The presence of conserved gating glutamate residues is typical for family members that function as antiporters. This is H(+)/Cl(-) exchange transporter 7 (Clcn7) from Rattus norvegicus (Rat).